We begin with the raw amino-acid sequence, 268 residues long: ClpXP adapter protein SpxH (268 aa).

Belongs to the SpxH family. In terms of assembly, interacts with Spx.

Its subcellular location is the cytoplasm. Adapter protein required for efficient degradation of Spx by ClpXP under non-stress conditions. Interaction with Spx stabilizes Spx and exposes the C-terminus of Spx for recognition and proteolysis by ClpXP. The protein is ClpXP adapter protein SpxH of Staphylococcus aureus (strain COL).